The primary structure comprises 175 residues: Adenine phosphoribosyltransferase (175 aa).

It belongs to the purine/pyrimidine phosphoribosyltransferase family. Homodimer.

It is found in the cytoplasm. The enzyme catalyses AMP + diphosphate = 5-phospho-alpha-D-ribose 1-diphosphate + adenine. It functions in the pathway purine metabolism; AMP biosynthesis via salvage pathway; AMP from adenine: step 1/1. Catalyzes a salvage reaction resulting in the formation of AMP, that is energically less costly than de novo synthesis. The sequence is that of Adenine phosphoribosyltransferase from Lactobacillus acidophilus (strain ATCC 700396 / NCK56 / N2 / NCFM).